The sequence spans 217 residues: Peroxiredoxin (217 aa).

The Thioredoxin domain maps to 2-159 (AVIGEKFPDV…VVRLVKALQT (158 aa)). Cysteine 46 functions as the Cysteine sulfenic acid (-SOH) intermediate in the catalytic mechanism. A substrate-binding site is contributed by arginine 122.

The protein belongs to the peroxiredoxin family. Prx6 subfamily. In terms of assembly, homodecamer. Pentamer of dimers that assemble into a ring structure.

The protein resides in the cytoplasm. The catalysed reaction is a hydroperoxide + [thioredoxin]-dithiol = an alcohol + [thioredoxin]-disulfide + H2O. In terms of biological role, thiol-specific peroxidase that catalyzes the reduction of hydrogen peroxide and organic hydroperoxides to water and alcohols, respectively. Plays a role in cell protection against oxidative stress by detoxifying peroxides. This Methanococcus vannielii (strain ATCC 35089 / DSM 1224 / JCM 13029 / OCM 148 / SB) protein is Peroxiredoxin.